The following is a 347-amino-acid chain: Palmitoyltransferase ZDHHC19 (347 aa).

2 helical membrane-spanning segments follow: residues 29 to 49 (VFAAFNVTLLLFLSGLFFGFP) and 59 to 79 (WAFPAITGPLFILTFFSLVSL). One can recognise a DHHC domain in the interval 112 to 162 (EWCPKCLFHRPPRTYHCPWCNICVEDFDHHCKWVNNCIGHRNFRLFMLLVL). Residue Cys142 is the S-palmitoyl cysteine intermediate of the active site. Transmembrane regions (helical) follow at residues 156-176 (LFMLLVLSLCLYSGALLVTCL) and 194-214 (AILVAVPAAGFLIPLFLLLLI). Residues 275 to 347 (IQEKTKPSPP…PTAEPAAGDP (73 aa)) are disordered.

Belongs to the DHHC palmitoyltransferase family.

Its subcellular location is the golgi apparatus membrane. The protein resides in the cytoplasm. It is found in the perinuclear region. It carries out the reaction L-cysteinyl-[protein] + hexadecanoyl-CoA = S-hexadecanoyl-L-cysteinyl-[protein] + CoA. Its function is as follows. Palmitoyltransferase that mediates palmitoylation oproteins, such as RRAS and SQSTM1. Catalyzes palmitoylation of RRAS, leading to increased cell viability. Acts as a positive regulator of autophagy by mediating palmitoylation of SQSTM1, promoting affinity between SQSTM1 and ATG8 proteins and recruitment of ubiquitinated cargo proteins to autophagosomes. This chain is Palmitoyltransferase ZDHHC19 (Zdhhc19), found in Mus musculus (Mouse).